A 251-amino-acid chain; its full sequence is Ferritin-1, chloroplastic (251 aa).

Residues 1 to 45 constitute a chloroplast transit peptide; the sequence is MLLKAAPAFALLNTQGENLSPLFSSSKSFSPKNGNRFVVSASKAT. An extension peptide (EP) region spans residues 46 to 78; it reads NHKPLTGVVFEPFEELKKELMLVPAVPDTSLCR. The Ferritin-like diiron domain maps to 79–232; sequence QKYSDDCEAA…EYVAQLRRVG (154 aa). 5 residues coordinate Fe cation: E96, E131, H134, E180, and Q214.

The protein belongs to the ferritin family. As to quaternary structure, oligomer of 24 subunits. There are two types of subunits: L (light) chain and H (heavy) chain. The major chain can be light or heavy, depending on the species and tissue type. The functional molecule forms a roughly spherical shell with a diameter of 12 nm and contains a central cavity into which the insoluble mineral iron core is deposited.

It is found in the plastid. The protein resides in the chloroplast. It carries out the reaction 4 Fe(2+) + O2 + 4 H(+) = 4 Fe(3+) + 2 H2O. Functionally, stores iron in a soluble, non-toxic, readily available form. Important for iron homeostasis. Has ferroxidase activity. Iron is taken up in the ferrous form and deposited as ferric hydroxides after oxidation. The protein is Ferritin-1, chloroplastic (FER1) of Nicotiana tabacum (Common tobacco).